We begin with the raw amino-acid sequence, 839 residues long: Taste receptor type 1 member 2 (839 aa).

The N-terminal stretch at 1-19 (MRPRATTICSLFFLLRVLA) is a signal peptide. Residues 20 to 566 (EPAKNSDFYL…AFLEWHEAPT (547 aa)) lie on the Extracellular side of the membrane. 9 N-linked (GlcNAc...) asparagine glycosylation sites follow: Asn84, Asn127, Asn248, Asn292, Asn312, Asn368, Asn428, Asn487, and Asn527. Residues 567–587 (IVVALLAALGFLSTLAILVIF) form a helical membrane-spanning segment. The Cytoplasmic segment spans residues 588–602 (WRHFQTPMVRSAGGP). Residues 603 to 623 (MCFLMLTLLLVAYMVVPVYVG) form a helical membrane-spanning segment. Over 624-635 (PPKVSTCFCRQA) the chain is Extracellular. A helical membrane pass occupies residues 636–656 (LFPLCFTICISCIAVRSFQIV). Residues 657 to 681 (CVFKMASRFPRAYSYWVRYQGPYVS) lie on the Cytoplasmic side of the membrane. A helical transmembrane segment spans residues 682–702 (MAFITVLKMVTVVIGMLATGL). At 703-727 (NPTTRIDPDDPKIMIVSCNPNYRNS) the chain is on the extracellular side. A helical transmembrane segment spans residues 728-748 (LFFNTGLDLLLSVVGFSFAYM). The Cytoplasmic portion of the chain corresponds to 749–760 (GKELPTNYNEAK). The helical transmembrane segment at 761–781 (FITLSMTFYFTSSVSLCTFMS) threads the bilayer. Over 782 to 784 (AYN) the chain is Extracellular. A helical membrane pass occupies residues 785–805 (GVLVTIMDLLVTVLNLLAISL). Residues 806–839 (GYFGPKCYMILFYPERNTPAYFNSMIQGYTMRRD) lie on the Cytoplasmic side of the membrane.

This sequence belongs to the G-protein coupled receptor 3 family. TAS1R subfamily. In terms of assembly, forms heterodimers with TAS1R3.

Its subcellular location is the cell membrane. Its function is as follows. Putative taste receptor. TAS1R2/TAS1R3 recognizes diverse natural and synthetic sweeteners. This chain is Taste receptor type 1 member 2 (TAS1R2), found in Macaca mulatta (Rhesus macaque).